The primary structure comprises 200 residues: Large ribosomal subunit protein bL25 (200 aa).

Residues 1 to 20 (MEARELKANVRKESGKEQAR) form a disordered region.

Belongs to the bacterial ribosomal protein bL25 family. CTC subfamily. In terms of assembly, part of the 50S ribosomal subunit; part of the 5S rRNA/L5/L18/L25 subcomplex. Contacts the 5S rRNA. Binds to the 5S rRNA independently of L5 and L18.

Its function is as follows. This is one of the proteins that binds to the 5S RNA in the ribosome where it forms part of the central protuberance. The sequence is that of Large ribosomal subunit protein bL25 from Syntrophus aciditrophicus (strain SB).